Consider the following 194-residue polypeptide: Prefoldin subunit 3 (194 aa).

It belongs to the prefoldin subunit alpha family. In terms of assembly, heterohexamer of two PFD-alpha type and four PFD-beta type subunits. Interacts with itself. Interacts with Vhl and betaTub56D/tubulin beta-1 chain. Interacts with tubulin alpha-beta heterodimers by itself or in complex with Vhl. Does not interact with microtubules (MTs). Expressed in larval central nervous system (CNS) and pupal testis (at protein level).

It is found in the cytoplasm. Its function is as follows. Binds specifically to cytosolic chaperonin (c-CPN) and transfers target proteins to it. Binds to nascent polypeptide chain and promotes folding in an environment in which there are many competing pathways for nonnative proteins. Required for tubulin stability and spindle and centrosome formation in cooperation with Vhl. The protein is Prefoldin subunit 3 (mgr) of Drosophila melanogaster (Fruit fly).